The chain runs to 219 residues: MMLSKVVMGLLTASLAAAHMEMSWPYPLRSRFDPQVPEEDIDYSMTSPLNSDGSNFPCKGYQTNTPWRATAQYTAGQTYNMTITGSATHGGGSCQLSLSYDNGKTFKVIQSMEGGCPLVSKYNFKIPGDVANGQALFAWTWYNLIGNRELYMNCADVVISGGTGTPSSFESAYPDLFVANVGNGCSTVEGRETVFANPGDQVIYGGTVTPSSPAFPICH.

Residues 1–18 (MMLSKVVMGLLTASLAAA) form the signal peptide. His-19 lines the Cu(+) pocket. Disulfide bonds link Cys-58–Cys-154, Cys-94–Cys-116, and Cys-185–Cys-218. The N-linked (GlcNAc...) asparagine glycan is linked to Asn-80. Residue His-89 coordinates Cu(+).

Belongs to the polysaccharide monooxygenase AA11 family. Requires Cu(2+) as cofactor.

In terms of biological role, lytic polysaccharide monooxygenase (LPMO) that depolymerizes chitin via the oxidation of scissile beta-(1-4)-glycosidic bonds, yielding C1 or C4 oxidation products. Catalysis by LPMOs requires the reduction of the active-site copper from Cu(II) to Cu(I) by a reducing agent and H(2)O(2) or O(2) as a cosubstrate. Has considerable affinity for alpha-chitin and, more so, beta-chitin. Active toward both alpha-chitin and beta-chitin allomorphs and enhances chitin degradation by an endoacting chitinase, in particular for alpha-chitin, and so plays a role in fungal chitin turnover. The catalytic activity increases when supplying reactions with hydrogen peroxide, confirming that it has peroxygenase activity. Does not show activity on phosphoric acid-swollen cellulose (PASC), Avicel, tamarind xyloglucan, birchwood xylan, beechwood xylan, acetyl glucuronoxylan from aspen, ivory nut mannan, acetylated konjac glucomannan, potato starch, heparin, hyaluronic acid, and chitosan. The sequence is that of AA11 family lytic polysaccharide monooxygenase A from Aspergillus fumigatus (strain CBS 144.89 / FGSC A1163 / CEA10) (Neosartorya fumigata).